We begin with the raw amino-acid sequence, 280 residues long: Large ribosomal subunit protein uL2 (280 aa).

The tract at residues 223-280 (VVMNPVDHPHGGGEGRTSGGRHPVTPWGKPTKGARTRNKNKASSKLIIRSRHAKKKGR) is disordered. The segment covering 254 to 280 (KGARTRNKNKASSKLIIRSRHAKKKGR) has biased composition (basic residues).

This sequence belongs to the universal ribosomal protein uL2 family. As to quaternary structure, part of the 50S ribosomal subunit. Forms a bridge to the 30S subunit in the 70S ribosome.

Functionally, one of the primary rRNA binding proteins. Required for association of the 30S and 50S subunits to form the 70S ribosome, for tRNA binding and peptide bond formation. It has been suggested to have peptidyltransferase activity; this is somewhat controversial. Makes several contacts with the 16S rRNA in the 70S ribosome. This Dinoroseobacter shibae (strain DSM 16493 / NCIMB 14021 / DFL 12) protein is Large ribosomal subunit protein uL2.